The primary structure comprises 354 residues: Carbonic anhydrase 12 (354 aa).

The first 24 residues, M1–S24, serve as a signal peptide directing secretion. The Extracellular portion of the chain corresponds to A25–S301. Residues N28, N42, N80, and N88 are each glycosylated (N-linked (GlcNAc...) asparagine). The Alpha-carbonic anhydrase domain maps to S30 to F290. An intrachain disulfide couples C50 to C231. Residue H94 is the Proton donor/acceptor of the active site. Positions 120, 122, and 146 each coordinate Zn(2+). T227–T228 lines the substrate pocket. Residues L302–V322 traverse the membrane as a helical segment. The Cytoplasmic portion of the chain corresponds to S323–A354.

It belongs to the alpha-carbonic anhydrase family. As to quaternary structure, homodimer. Zn(2+) is required as a cofactor.

The protein localises to the membrane. The protein resides in the cell membrane. It catalyses the reaction hydrogencarbonate + H(+) = CO2 + H2O. Its activity is regulated as follows. Inhibited by acetazolamide. Functionally, reversible hydration of carbon dioxide. The polypeptide is Carbonic anhydrase 12 (Mus musculus (Mouse)).